We begin with the raw amino-acid sequence, 131 residues long: Glycine cleavage system H protein (131 aa).

The region spanning 24–106 (RVTVGISDHA…YGEGWMFVVE (83 aa)) is the Lipoyl-binding domain. An N6-lipoyllysine modification is found at Lys65.

The protein belongs to the GcvH family. In terms of assembly, the glycine cleavage system is composed of four proteins: P, T, L and H. (R)-lipoate is required as a cofactor.

In terms of biological role, the glycine cleavage system catalyzes the degradation of glycine. The H protein shuttles the methylamine group of glycine from the P protein to the T protein. This chain is Glycine cleavage system H protein, found in Stenotrophomonas maltophilia (strain K279a).